Here is a 918-residue protein sequence, read N- to C-terminus: Nitrate reductase [NADH] (918 aa).

Residues 25-44 form a disordered region; sequence KNGPNHRADSPVRGCNFPNS. C195 contacts Mo-molybdopterin. Residues 543–618 form the Cytochrome b5 heme-binding domain; it reads SNTYTLSEVK…LEDYRIGELI (76 aa). Heme contacts are provided by H578 and H601. The FAD-binding FR-type domain occupies 661–774; sequence NEKIPCKLIS…KGPLGHIEYT (114 aa). Residues 714–717, 731–735, F736, F743, 748–750, and T801 contribute to the FAD site; these read RAYT, VVKVY, and IMS.

This sequence belongs to the nitrate reductase family. In terms of assembly, homodimer. Requires FAD as cofactor. Heme is required as a cofactor. The cofactor is Mo-molybdopterin.

The catalysed reaction is nitrite + NAD(+) + H2O = nitrate + NADH + H(+). Its function is as follows. Nitrate reductase is a key enzyme involved in the first step of nitrate assimilation in plants, fungi and bacteria. This Cucurbita maxima (Pumpkin) protein is Nitrate reductase [NADH].